The chain runs to 346 residues: N(4)-(beta-N-acetylglucosaminyl)-L-asparaginase (346 aa).

The N-terminal stretch at 1 to 23 is a signal peptide; the sequence is MARKSNLPVLLVPFLLCQALVRC. At Ser24 the chain carries Blocked amino end (Ser). The N-linked (GlcNAc...) asparagine glycan is linked to Asn38. Cystine bridges form between Cys64–Cys69 and Cys163–Cys179. Thr206 acts as the Nucleophile in catalysis. Substrate-binding positions include 234–237 and 257–260; these read RVGD and TGNG. Cys286 and Cys306 are joined by a disulfide. N-linked (GlcNAc...) asparagine glycosylation occurs at Asn308. Cys317 and Cys345 form a disulfide bridge.

It belongs to the Ntn-hydrolase family. As to quaternary structure, heterotetramer of two alpha and two beta chains arranged as a dimer of alpha/beta heterodimers. Post-translationally, cleaved into an alpha and beta chain by autocatalysis; this activates the enzyme. The N-terminal residue of the beta subunit is responsible for the nucleophile hydrolase activity. In terms of processing, N-glycosylated.

It is found in the lysosome. It carries out the reaction N(4)-(beta-N-acetyl-D-glucosaminyl)-L-asparagine + H2O = N-acetyl-beta-D-glucosaminylamine + L-aspartate + H(+). In terms of biological role, cleaves the GlcNAc-Asn bond which joins oligosaccharides to the peptide of asparagine-linked glycoproteins. This Homo sapiens (Human) protein is N(4)-(beta-N-acetylglucosaminyl)-L-asparaginase (AGA).